Consider the following 607-residue polypeptide: Glutamine--fructose-6-phosphate aminotransferase [isomerizing] (607 aa).

The active-site Nucleophile; for GATase activity is the Cys2. The Glutamine amidotransferase type-2 domain maps to 2–217 (CGIIGIIGND…DGDWAVLTRN (216 aa)). 2 consecutive SIS domains span residues 283-422 (IGID…ARGA) and 455-597 (VCHD…VDQP). The active-site For Fru-6P isomerization activity is the Lys602.

In terms of assembly, homodimer.

It is found in the cytoplasm. The catalysed reaction is D-fructose 6-phosphate + L-glutamine = D-glucosamine 6-phosphate + L-glutamate. Catalyzes the first step in hexosamine metabolism, converting fructose-6P into glucosamine-6P using glutamine as a nitrogen source. The protein is Glutamine--fructose-6-phosphate aminotransferase [isomerizing] of Brucella suis biovar 1 (strain 1330).